The sequence spans 1888 residues: E3 ubiquitin-protein ligase UBR3 (1888 aa).

Residues 1-24 (MAAAAAAAVGGQQPSQPELPAPGL) are disordered. A UBR-type zinc finger spans residues 118–189 (ALCGLVWTAN…ESGFCKRHQI (72 aa)). Residues 339–362 (GQVDSSDEDDQDGSQGLGKRKRVK) are disordered. Phosphoserine occurs at positions 343 and 344. Helical transmembrane passes span 761 to 781 (MLEG…HLGM) and 919 to 939 (LLHC…ILMD). Disordered stretches follow at residues 1008–1028 (APEV…GSLQ) and 1164–1186 (VPPK…RQKA). Residues 1016 to 1028 (PASTSSDNLGSLQ) show a composition bias toward polar residues. A coiled-coil region spans residues 1168–1199 (KVTAAEKKTLDKEERRQKARERQQKLLAEFAS). Basic and acidic residues predominate over residues 1170-1186 (TAAEKKTLDKEERRQKA). Ser-1199 is subject to Phosphoserine. The RING-type; degenerate zinc-finger motif lies at 1306–1364 (DSSCLLAVSIGWEGGVYVQTCGHTLHIDCHKSYMESLRNDQVLQGFSVDKGEFTCPLCR). The chain crosses the membrane as a helical span at residues 1806 to 1826 (QNCGAGTGIFLLINASVIIII).

This sequence belongs to the E3 ubiquitin-protein ligase UBR1-like family. As to quaternary structure, interacts with UBE2A and UBE2B.

Its subcellular location is the membrane. It carries out the reaction S-ubiquitinyl-[E2 ubiquitin-conjugating enzyme]-L-cysteine + [acceptor protein]-L-lysine = [E2 ubiquitin-conjugating enzyme]-L-cysteine + N(6)-ubiquitinyl-[acceptor protein]-L-lysine.. It participates in protein modification; protein ubiquitination. Functionally, E3 ubiquitin-protein ligase which is a component of the N-end rule pathway. Does not bind to proteins bearing specific N-terminal residues that are destabilizing according to the N-end rule, leading to their ubiquitination and subsequent degradation. May play a role in Shh signaling by mediating the ubiquitination of Kif7. May be important for MYH9 function in certain tissues, possibly by regulating the ubiquitination of MYH9 and consequently affecting its interaction with MYO7A. This is E3 ubiquitin-protein ligase UBR3 (UBR3) from Homo sapiens (Human).